A 103-amino-acid polypeptide reads, in one-letter code: Large ribosomal subunit protein uL24 (103 aa).

Belongs to the universal ribosomal protein uL24 family. Part of the 50S ribosomal subunit.

In terms of biological role, one of two assembly initiator proteins, it binds directly to the 5'-end of the 23S rRNA, where it nucleates assembly of the 50S subunit. Its function is as follows. One of the proteins that surrounds the polypeptide exit tunnel on the outside of the subunit. The chain is Large ribosomal subunit protein uL24 from Listeria innocua serovar 6a (strain ATCC BAA-680 / CLIP 11262).